A 336-amino-acid polypeptide reads, in one-letter code: MSIVPAVVELEKIRDFFYRLAEARDRLREAGFRHPAEVPLAVGTPLVKLGFIAMLRRGVIMDVTNVEQAQVAEEAGAVGVMVLDKLPYDVRKAGGVARMADLKIIEEVMDAITIPVSAKVRIGHFYEAVLLEQIGVDLIDESEVLTPVDEQHHINKWLFKTPFVNGARELCEALRRISEGASMIRSKGEAGTGNVAEAVKHFKAIYGAVRDLTAHRDDEEYLRDYARRCQVPLEVVKLTADMGRVPVITFAAGGIATPADAAFMMWLGADGVFVGSGIFKSQDPERRAEAIVLATAYWDDPEAVAEAQKMVSEKASMMGIDIRALKPEELLQTRGV.

D62 contacts D-ribose 5-phosphate. The active-site Schiff-base intermediate with D-ribose 5-phosphate is the K119. G191 is a D-ribose 5-phosphate binding site. K203 is a binding site for D-glyceraldehyde 3-phosphate. D-ribose 5-phosphate is bound by residues G254 and 275–276; that span reads GS.

The protein belongs to the PdxS/SNZ family. As to quaternary structure, in the presence of PdxT, forms a dodecamer of heterodimers.

It catalyses the reaction aldehydo-D-ribose 5-phosphate + D-glyceraldehyde 3-phosphate + L-glutamine = pyridoxal 5'-phosphate + L-glutamate + phosphate + 3 H2O + H(+). It functions in the pathway cofactor biosynthesis; pyridoxal 5'-phosphate biosynthesis. Functionally, catalyzes the formation of pyridoxal 5'-phosphate from ribose 5-phosphate (RBP), glyceraldehyde 3-phosphate (G3P) and ammonia. The ammonia is provided by the PdxT subunit. Can also use ribulose 5-phosphate and dihydroxyacetone phosphate as substrates, resulting from enzyme-catalyzed isomerization of RBP and G3P, respectively. This is Pyridoxal 5'-phosphate synthase subunit PdxS from Pyrobaculum calidifontis (strain DSM 21063 / JCM 11548 / VA1).